A 372-amino-acid polypeptide reads, in one-letter code: Delta-type opioid receptor (372 aa).

Over 1 to 47 (MELVPSARAELQSSPLVNLSDAFPSAFPSAGANASGSPGARSASSLA) the chain is Extracellular. N-linked (GlcNAc...) asparagine glycosylation is found at Asn18 and Asn33. A helical membrane pass occupies residues 48 to 75 (LAIAITALYSAVCAVGLLGNVLVMFGIV). The Cytoplasmic segment spans residues 76–85 (RYTKLKTATN). A helical transmembrane segment spans residues 86 to 110 (IYIFNLALADALATSTLPFQSAKYL). Over 111–122 (METWPFGELLCK) the chain is Extracellular. A disulfide bond links Cys121 and Cys198. Residues 123–144 (AVLSIDYYNMFTSIFTLTMMSV) form a helical membrane-spanning segment. Topologically, residues 145-163 (DRYIAVCHPVKALDFRTPA) are cytoplasmic. Residues 164–186 (KAKLINICIWVLASGVGVPIMVM) traverse the membrane as a helical segment. The Extracellular portion of the chain corresponds to 187–206 (AVTQPRDGAVVCMLQFPSPS). The chain crosses the membrane as a helical span at residues 207-238 (WYWDTVTKICVFLFAFVVPILIITVCYGLMLL). The Cytoplasmic segment spans residues 239 to 261 (RLRSVRLLSGSKEKDRSLRRITR). Residues 262–284 (MVLVVVGAFVVCWAPIHIFVIVW) traverse the membrane as a helical segment. Residues 285–299 (TLVDINRRDPLVVAA) lie on the Extracellular side of the membrane. Residues 300-321 (LHLCIALGYANSSLNPVLYAFL) traverse the membrane as a helical segment. The Cytoplasmic segment spans residues 322–372 (DENFKRCFRQLCRTPCGRQEPGSLRRPRQATTRERVTACTPSDGPGGGAAA). Cys333 carries S-palmitoyl cysteine lipidation. The disordered stretch occupies residues 340 to 372 (QEPGSLRRPRQATTRERVTACTPSDGPGGGAAA).

The protein belongs to the G-protein coupled receptor 1 family. May form homooligomers. Forms a heterodimer with OPRM1. Interacts with GPRASP1. Interacts with RTP4; the interaction promotes cell surface localization of the OPRD1-OPRM1 heterodimer. In terms of processing, ubiquitinated. A basal ubiquitination seems not to be related to degradation. Ubiquitination is increased upon formation of OPRM1:OPRD1 oligomers leading to proteasomal degradation; the ubiquitination is diminished by RTP4. Brain, with high concentrations in the basal ganglia and limbic regions.

It localises to the cell membrane. In terms of biological role, G-protein coupled receptor that functions as a receptor for endogenous enkephalins and for a subset of other opioids. Ligand binding causes a conformation change that triggers signaling via guanine nucleotide-binding proteins (G proteins) and modulates the activity of down-stream effectors, such as adenylate cyclase. Signaling leads to the inhibition of adenylate cyclase activity. Inhibits neurotransmitter release by reducing calcium ion currents and increasing potassium ion conductance. Plays a role in the perception of pain and in opiate-mediated analgesia. Plays a role in developing analgesic tolerance to morphine. In Mus musculus (Mouse), this protein is Delta-type opioid receptor (Oprd1).